Reading from the N-terminus, the 391-residue chain is Multidrug resistance protein MdtL (391 aa).

12 helical membrane passes run 4-24, 42-62, 69-89, 93-113, 131-151, 158-178, 203-222, 245-265, 269-289, 293-313, 331-351, and 356-376; these read FLIC…MYLV, IAFS…GKVA, PVAI…SLAE, LFLA…VVAF, LLNG…HLIM, SLFW…LFIL, FFLS…LTFV, ALTA…LGIF, TLMI…AVSP, VSLF…GVAM, LGIA…VVGI, and MLIG…MFVA.

This sequence belongs to the major facilitator superfamily. DHA1 family. MdtL (TC 2.A.1.2.22) subfamily.

Its subcellular location is the cell inner membrane. Confers resistance to chloramphenicol. In Escherichia coli O139:H28 (strain E24377A / ETEC), this protein is Multidrug resistance protein MdtL.